A 107-amino-acid polypeptide reads, in one-letter code: uncharacterized protein (107 aa).

2 helical membrane passes run 14-34 (YLAEFLLGLTALFGLYLIVAW) and 68-88 (FFVFLGYVAHIIPFTAFLVPI).

The protein resides in the cell membrane. This is an uncharacterized protein from Haemophilus influenzae (strain ATCC 51907 / DSM 11121 / KW20 / Rd).